The primary structure comprises 333 residues: MNTADKRLDEILLAEPRGFCAGVDRAIEIVERALTKFGAPIYVRHEIVHNTYVVNELKAKGAIFIEELSDVPPGATLVFSAHGVSKAIQDEARARGFQIFDATCPLVTKVHVEVAKLHKEGYEFIMIGHKGHPEVEGTMGQLDSGIHLVEDVADVARITPSQTERLAVVTQTTLSVDDAAEISAAVKARFPQVREPKQQDICYATQNRQDAVKVLSPQVDILIVVGSPTSSNSNRLRELAAKLGTEAYMVDDASELRESWFEGKSRVGLTAGASAPEILVKQVIDRIRALGAVSVRKMDGIEETIKFPLPKGLKVDAQGHMLDVGDSQLHQLT.

C20 lines the [4Fe-4S] cluster pocket. Residues H49 and H82 each contribute to the (2E)-4-hydroxy-3-methylbut-2-enyl diphosphate site. Residues H49 and H82 each contribute to the dimethylallyl diphosphate site. Isopentenyl diphosphate-binding residues include H49 and H82. C104 lines the [4Fe-4S] cluster pocket. Residue H132 coordinates (2E)-4-hydroxy-3-methylbut-2-enyl diphosphate. H132 lines the dimethylallyl diphosphate pocket. Isopentenyl diphosphate is bound at residue H132. E134 (proton donor) is an active-site residue. A (2E)-4-hydroxy-3-methylbut-2-enyl diphosphate-binding site is contributed by T172. C202 lines the [4Fe-4S] cluster pocket. Positions 230, 231, 232, and 274 each coordinate (2E)-4-hydroxy-3-methylbut-2-enyl diphosphate. Residues S230, S231, N232, and S274 each coordinate dimethylallyl diphosphate. Isopentenyl diphosphate contacts are provided by S230, S231, N232, and S274.

The protein belongs to the IspH family. [4Fe-4S] cluster is required as a cofactor.

It carries out the reaction isopentenyl diphosphate + 2 oxidized [2Fe-2S]-[ferredoxin] + H2O = (2E)-4-hydroxy-3-methylbut-2-enyl diphosphate + 2 reduced [2Fe-2S]-[ferredoxin] + 2 H(+). The catalysed reaction is dimethylallyl diphosphate + 2 oxidized [2Fe-2S]-[ferredoxin] + H2O = (2E)-4-hydroxy-3-methylbut-2-enyl diphosphate + 2 reduced [2Fe-2S]-[ferredoxin] + 2 H(+). The protein operates within isoprenoid biosynthesis; dimethylallyl diphosphate biosynthesis; dimethylallyl diphosphate from (2E)-4-hydroxy-3-methylbutenyl diphosphate: step 1/1. Its pathway is isoprenoid biosynthesis; isopentenyl diphosphate biosynthesis via DXP pathway; isopentenyl diphosphate from 1-deoxy-D-xylulose 5-phosphate: step 6/6. Its function is as follows. Catalyzes the conversion of 1-hydroxy-2-methyl-2-(E)-butenyl 4-diphosphate (HMBPP) into a mixture of isopentenyl diphosphate (IPP) and dimethylallyl diphosphate (DMAPP). Acts in the terminal step of the DOXP/MEP pathway for isoprenoid precursor biosynthesis. This Polaromonas sp. (strain JS666 / ATCC BAA-500) protein is 4-hydroxy-3-methylbut-2-enyl diphosphate reductase.